Reading from the N-terminus, the 1387-residue chain is MEVLMAERANLVFHNKVIDGTAMKRLISRLIEHFGMAYTSHILDQVKTLGFQQATATSISLGIDDLLTIPSKRWLVQDAEQQSLILEKQHHYGNVHAVEKLRQSIEIWYATSEFLRQEMKPNFRMTDPFNPVHIMSFSGARGNASQVHQLVGMRGLMADPQGQMIDLPIQSNLREGLSLTEYIISCYGARKGVVDTAVRTSDAGYLTRRLVEVVQHIVVRRKDCGTVRGISVSPRNGMMPERVFIQTLIGRVLADDIYLGPRCIATRNQDIGSGLVNRFITFRAQPIYIRTPFTCRSTSWICRLCYGRSPTHGDLAELGEAVGIIAGQSIGEPGTQLTLRTFHTGGVFTGGTAEHVRAPSNGKIKFNEDLVHPTRTRHGHPAFLCSIDLYVTIESEDIIHNVNIPPKSFLLVQNDQYVESEQVIAEIRAGTSTLNFKEKVRKHIYSDSEGEMHWNTDVYHAPAFTYGNVHLLPKTSHLWILLGEPCRSDLVALSIHKDQDQMNAHSLSVKRRYISNLSVTNDQARHKFFSSDFSGKKEDRITDYSELNRIGHCNLPYLAILHANSDLLAKRRRNRFIIPLQSIQEHENELMPSSGISIEIPIHGIFRKKSIIAYFDDPRYRRKSSGITKYGTIEVHSIVKKEDLIEYRGVKEFRPKYQMKVDRFFFIPEEVHILPGSSSIMVRNNSIIGVDTQITLTTRSRVGGLVRVERKKKRIELKIFSGDIHFPGETDKISRHSGVLIPPGTGKTNSKESKKWKNWIYVQRITPTKKKYFVLVRPVVTYEITDGINLATLFFPDLLQERDNVQLRVVNYILYGTGKPIRGFYDTSIQLVRTCLVLNWVQDKKSSSIEEARTSFVEIRINSLIRDFLKIDLAKSPILYTGKRKDPSGSGLISENGSDRTNINPFSSSFFYSKARIKESLNQNQGTIHTLLNRNKECQSLIILSSSNCFRMGPFNDVKYHNVIKESIQKDPLIQIRNSLGPLGTALQIANFYSFSHLITYNQILVTNYLQLDNLKQSFQVLKYYLMDENGKIYNPDRCCNIILNPFNLNWFFLHHNYCEETSTTMSLGQFICENVCIAKNGPHLKPGQVLIVQVDSVVIRSAKPYLATPGATVHGHYGEILYEGDTLVTFIYEKSRSGDITQGLPKVEQVLEVRSIDSISMNLEKRVEGWNECITRNLGIPWGFLIGAELTIVQSRISLVNKIQKVYRSQGVQIHNRHIEIIVRQITSKVLVSEDGMSNVFLPGEFIGLLRAERMGRALEEAICYQAVLLGITKASLNTQSFISEASFQETARVLAKAALRGRIDWLKGLKENVVLGGMIPVGTGFKGLVPPSRQHKNIPLETKNKNLFEGEMRDILFHHRKFFDSCLSKNFHDTPEQSFIGFNDS.

The Zn(2+) site is built by Cys-224, Cys-295, Cys-302, and Cys-305.

This sequence belongs to the RNA polymerase beta' chain family. RpoC2 subfamily. As to quaternary structure, in plastids the minimal PEP RNA polymerase catalytic core is composed of four subunits: alpha, beta, beta', and beta''. When a (nuclear-encoded) sigma factor is associated with the core the holoenzyme is formed, which can initiate transcription. Requires Zn(2+) as cofactor.

It localises to the plastid. The protein localises to the chloroplast. It carries out the reaction RNA(n) + a ribonucleoside 5'-triphosphate = RNA(n+1) + diphosphate. In terms of biological role, DNA-dependent RNA polymerase catalyzes the transcription of DNA into RNA using the four ribonucleoside triphosphates as substrates. This is DNA-directed RNA polymerase subunit beta'' from Panax ginseng (Korean ginseng).